The following is a 787-amino-acid chain: Lon protease (787 aa).

The 199-residue stretch at 12-210 (LPLIPLRGLA…LIYSILLEEI (199 aa)) folds into the Lon N-terminal domain. 362-369 (GPPGTGKT) is an ATP binding site. The Lon proteolytic domain occupies 599 to 780 (NPQIGLVNGL…DEVLEQALLK (182 aa)). Catalysis depends on residues Ser686 and Lys729.

It belongs to the peptidase S16 family. As to quaternary structure, homohexamer. Organized in a ring with a central cavity.

It localises to the cytoplasm. The catalysed reaction is Hydrolysis of proteins in presence of ATP.. Its function is as follows. ATP-dependent serine protease that mediates the selective degradation of mutant and abnormal proteins as well as certain short-lived regulatory proteins. Required for cellular homeostasis and for survival from DNA damage and developmental changes induced by stress. Degrades polypeptides processively to yield small peptide fragments that are 5 to 10 amino acids long. Binds to DNA in a double-stranded, site-specific manner. In Clostridioides difficile (strain 630) (Peptoclostridium difficile), this protein is Lon protease.